The chain runs to 282 residues: Protease HtpX homolog (282 aa).

2 helical membrane-spanning segments follow: residues 6–26 and 28–48; these read TFIL…LIGG and QGVI…YFFS. Zn(2+) is bound at residue histidine 130. The active site involves glutamate 131. Position 134 (histidine 134) interacts with Zn(2+). Transmembrane regions (helical) follow at residues 140–160 and 177–197; these read ILIG…ANFA and ILMI…QMAI. Glutamate 202 serves as a coordination point for Zn(2+).

Belongs to the peptidase M48B family. Zn(2+) is required as a cofactor.

It localises to the cell inner membrane. This chain is Protease HtpX homolog, found in Campylobacter hominis (strain ATCC BAA-381 / DSM 21671 / CCUG 45161 / LMG 19568 / NCTC 13146 / CH001A).